The primary structure comprises 940 residues: Translation initiation factor IF-2 (940 aa).

Low complexity-rich tracts occupy residues 138–147 (APVEVVAEPE) and 161–208 (PVVV…ITEL). Positions 138-354 (APVEVVAEPE…DRQTFQAPTE (217 aa)) are disordered. Basic and acidic residues-rich tracts occupy residues 214–271 (IAAR…EEAA) and 289–311 (AKADDKAGKDAKRGPAREADGAK). In terms of domain architecture, tr-type G spans 440–609 (PRAPVVTVMG…LLQAEVLELT (170 aa)). The G1 stretch occupies residues 449–456 (GHVDHGKT). Position 449-456 (449-456 (GHVDHGKT)) interacts with GTP. The interval 474 to 478 (GITQH) is G2. Residues 495 to 498 (DTPG) form a G3 region. GTP-binding positions include 495–499 (DTPGH) and 549–552 (TKID). The segment at 549 to 552 (TKID) is G4. The G5 stretch occupies residues 585-587 (SAK).

This sequence belongs to the TRAFAC class translation factor GTPase superfamily. Classic translation factor GTPase family. IF-2 subfamily.

The protein resides in the cytoplasm. In terms of biological role, one of the essential components for the initiation of protein synthesis. Protects formylmethionyl-tRNA from spontaneous hydrolysis and promotes its binding to the 30S ribosomal subunits. Also involved in the hydrolysis of GTP during the formation of the 70S ribosomal complex. The polypeptide is Translation initiation factor IF-2 (Azoarcus sp. (strain BH72)).